Consider the following 156-residue polypeptide: Small ribosomal subunit protein uS7 (156 aa).

Belongs to the universal ribosomal protein uS7 family. In terms of assembly, part of the 30S ribosomal subunit. Contacts proteins S9 and S11.

Its function is as follows. One of the primary rRNA binding proteins, it binds directly to 16S rRNA where it nucleates assembly of the head domain of the 30S subunit. Is located at the subunit interface close to the decoding center, probably blocks exit of the E-site tRNA. This is Small ribosomal subunit protein uS7 from Nitrosospira multiformis (strain ATCC 25196 / NCIMB 11849 / C 71).